Reading from the N-terminus, the 179-residue chain is Large ribosomal subunit protein uL5 (179 aa).

The protein belongs to the universal ribosomal protein uL5 family. In terms of assembly, part of the 50S ribosomal subunit; part of the 5S rRNA/L5/L18/L25 subcomplex. Contacts the 5S rRNA and the P site tRNA. Forms a bridge to the 30S subunit in the 70S ribosome.

Functionally, this is one of the proteins that bind and probably mediate the attachment of the 5S RNA into the large ribosomal subunit, where it forms part of the central protuberance. In the 70S ribosome it contacts protein S13 of the 30S subunit (bridge B1b), connecting the 2 subunits; this bridge is implicated in subunit movement. Contacts the P site tRNA; the 5S rRNA and some of its associated proteins might help stabilize positioning of ribosome-bound tRNAs. This Bdellovibrio bacteriovorus (strain ATCC 15356 / DSM 50701 / NCIMB 9529 / HD100) protein is Large ribosomal subunit protein uL5.